The following is a 310-amino-acid chain: tRNA-cytidine(32) 2-sulfurtransferase (310 aa).

The short motif at 48–53 is the PP-loop motif element; sequence SGGKDS. 3 residues coordinate [4Fe-4S] cluster: C123, C126, and C214.

Belongs to the TtcA family. In terms of assembly, homodimer. Mg(2+) is required as a cofactor. The cofactor is [4Fe-4S] cluster.

It localises to the cytoplasm. The enzyme catalyses cytidine(32) in tRNA + S-sulfanyl-L-cysteinyl-[cysteine desulfurase] + AH2 + ATP = 2-thiocytidine(32) in tRNA + L-cysteinyl-[cysteine desulfurase] + A + AMP + diphosphate + H(+). It functions in the pathway tRNA modification. In terms of biological role, catalyzes the ATP-dependent 2-thiolation of cytidine in position 32 of tRNA, to form 2-thiocytidine (s(2)C32). The sulfur atoms are provided by the cysteine/cysteine desulfurase (IscS) system. This chain is tRNA-cytidine(32) 2-sulfurtransferase, found in Vibrio cholerae serotype O1 (strain ATCC 39315 / El Tor Inaba N16961).